Reading from the N-terminus, the 367-residue chain is Probable butyrate kinase (367 aa).

The protein belongs to the acetokinase family.

The protein localises to the cytoplasm. It carries out the reaction butanoate + ATP = butanoyl phosphate + ADP. The protein is Probable butyrate kinase of Bacillus cereus (strain Q1).